Reading from the N-terminus, the 191-residue chain is MSVRVARIGKPHGVRGEVTVELFTDDPQARFAPGSVLSIQHARGGRRGQGSAADAREPLAVQSLTVTGHRWNKDVLVARFEEISDRNAAEAARGLELFAEVADLPLEDDEWHQDDLLGLVAVDLTRGEARIGTVKALIQGSAQDLLEITPQGGGRTVLVPFVEEIVPEVDLDRGLVLVSPPPGLLELGEGE.

The PRC barrel domain maps to 107–184 (EDDEWHQDDL…LVLVSPPPGL (78 aa)).

The protein belongs to the RimM family. In terms of assembly, binds ribosomal protein uS19.

The protein localises to the cytoplasm. Functionally, an accessory protein needed during the final step in the assembly of 30S ribosomal subunit, possibly for assembly of the head region. Essential for efficient processing of 16S rRNA. May be needed both before and after RbfA during the maturation of 16S rRNA. It has affinity for free ribosomal 30S subunits but not for 70S ribosomes. The protein is Ribosome maturation factor RimM of Kocuria rhizophila (strain ATCC 9341 / DSM 348 / NBRC 103217 / DC2201).